Reading from the N-terminus, the 121-residue chain is MIQQESFLTVADNSGAKRIQCIRVLGSNRRYAHVGDIIVAAVKDAMPNMSVKKSEVVKAVVVRTKATLRRETGNSIRFDDNAAVLINEDKNPRGTRVFGPVARELRERNFTKIVSLAPEVI.

This sequence belongs to the universal ribosomal protein uL14 family. In terms of assembly, part of the 50S ribosomal subunit. Forms a cluster with proteins L3 and L19. In the 70S ribosome, L14 and L19 interact and together make contacts with the 16S rRNA in bridges B5 and B8.

Its function is as follows. Binds to 23S rRNA. Forms part of two intersubunit bridges in the 70S ribosome. This is Large ribosomal subunit protein uL14 from Prochlorococcus marinus (strain MIT 9303).